The sequence spans 68 residues: Sec-independent protein translocase protein TatA (68 aa).

Residues 1–21 (MGSLSIWHWLIVLLIVVLVFG) traverse the membrane as a helical segment. Residues 42–68 (GMNEGAKDGQPPAKDAGRIIDGEADKK) are disordered. The segment covering 56-68 (DAGRIIDGEADKK) has biased composition (basic and acidic residues).

It belongs to the TatA/E family. As to quaternary structure, the Tat system comprises two distinct complexes: a TatABC complex, containing multiple copies of TatA, TatB and TatC subunits, and a separate TatA complex, containing only TatA subunits. Substrates initially bind to the TatABC complex, which probably triggers association of the separate TatA complex to form the active translocon.

It is found in the cell inner membrane. Functionally, part of the twin-arginine translocation (Tat) system that transports large folded proteins containing a characteristic twin-arginine motif in their signal peptide across membranes. TatA could form the protein-conducting channel of the Tat system. The polypeptide is Sec-independent protein translocase protein TatA (Chromobacterium violaceum (strain ATCC 12472 / DSM 30191 / JCM 1249 / CCUG 213 / NBRC 12614 / NCIMB 9131 / NCTC 9757 / MK)).